Reading from the N-terminus, the 542-residue chain is Importin subunit alpha (542 aa).

N-acetylmethionine is present on Met1. Residues 1–11 are compositionally biased toward polar residues; that stretch reads MDNGTDSSTSK. In terms of domain architecture, IBB spans 1–65; it reads MDNGTDSSTS…RNFIPPTDGA (65 aa). A disordered region spans residues 1 to 77; the sequence is MDNGTDSSTS…DEEDESSVSA (77 aa). Over residues 27 to 53 the composition is skewed to basic and acidic residues; that stretch reads FSADELRRRRDTQQVELRKAKRDEALA. An ARM 1; truncated repeat occupies 89-122; it reads LPQMTQQLNSDDMQEQLSATVKFRQILSREHRPP. 8 ARM repeats span residues 123–162, 163–204, 205–251, 252–288, 289–330, 331–372, 373–417, and 418–471; these read IDVVIQAGVVPRLVEFMRENQPEMLQLEAAWALTNIASGT, SAQT…AGDS, TDYR…PQPD, WSVVSQALPTLAKLIYSMDTETLVDACWAISYLSDGP, QEAI…VTGN, DLQT…TAGN, TEQI…GLQR, and PDII…LNIN. The interval 209–335 is NLS binding site 1; sequence DYVLQCNAME…IVTGNDLQTQ (127 aa). The interval 419–505 is NLS binding site 2; that stretch reads DIIRYLVSQG…KIYEKAYKII (87 aa). The ARM 10; atypical repeat unit spans residues 472–508; that stretch reads ENADFIEKAGGMEKIFNCQQNENDKIYEKAYKIIETY.

The protein belongs to the importin alpha family. As to quaternary structure, forms a complex with an importin beta subunit. In the nucleus, interacts with NUP2 which accelerate release of NLSs, NUP2 is subsequently displaced by CSE1:RanGTP which mediates re-export and recycling. Interacts with HEH2, SHE2, and STS1.

It is found in the cytoplasm. The protein resides in the perinuclear region. Functionally, functions in nuclear protein import as an adapter protein for importin beta nuclear receptors. Binds specifically and directly to substrates containing either a simple or bipartite NLS motif. Promotes docking of import substrates to the nuclear envelope. Together with importin beta KAP95, mediates nuclear import of transcription factor GCN4. Together with tethering factor STS1, targets the proteasome to the nucleus. The polypeptide is Importin subunit alpha (SRP1) (Saccharomyces cerevisiae (strain ATCC 204508 / S288c) (Baker's yeast)).